Consider the following 497-residue polypeptide: E3 ubiquitin-protein ligase CBL-C (497 aa).

The interval P7–C145 is 4H. The 315-residue stretch at P7–E321 folds into the Cbl-PTB domain. The tract at residues G146–F218 is EF-hand-like. Ca(2+) is bound by residues D199, T201, and E210. Residues Q219–E321 form an SH2-like region. R264 contacts 4-O-phospho-L-tyrosine. The linker stretch occupies residues L322–L350. The residue at position 341 (Y341) is a Phosphotyrosine; by SRC. An RING-type zinc finger spans residues C351–R390. The interaction with RET stretch occupies residues C351–S497.

As to quaternary structure, interacts with Ubiquitin-conjugating enzyme E2 UBE2D2 and UBE2D3. Interacts with EGFR (tyrosine phosphorylated). Interacts with the SH3 domain proteins LYN and CRK. Interacts (via RING-type zinc finger) with TGFB1I1 (via LIM zinc-binding domain 2); the interaction is direct and enhances the E3 activity. Interacts directly with RET (inactive) and CD2AP; dissociates from RET upon RET activation by GDNF which also increases the interaction with CD2AP suggesting dissociation as CBLC:CD2AP complex. Interacts with SRC; the interaction is enhanced when SRC is phosphorylated at 'Tyr-419'. In terms of processing, phosphorylated on multiple tyrosine residues by SRC. Post-translationally, autoubiquitinated, when phosphorylated at Tyr-341.

The catalysed reaction is S-ubiquitinyl-[E2 ubiquitin-conjugating enzyme]-L-cysteine + [acceptor protein]-L-lysine = [E2 ubiquitin-conjugating enzyme]-L-cysteine + N(6)-ubiquitinyl-[acceptor protein]-L-lysine.. Phosphorylation at Tyr-341 is necessary and sufficient for the activation of E3 activity. Acts as an E3 ubiquitin-protein ligase, which accepts ubiquitin from specific E2 ubiquitin-conjugating enzymes, and then transfers it to substrates promoting their degradation by the proteasome. Functionally coupled with the E2 ubiquitin-protein ligases UB2D1, UB2D2 and UB2D3. Regulator of EGFR mediated signal transduction; upon EGF activation, ubiquitinates EGFR. Inhibits EGF stimulated MAPK1 activation. Promotes ubiquitination of SRC phosphorylated at 'Tyr-419', has the highest ubiquitin ligase activity among CBL family proteins. In collaboration with CD2AP may act as regulatory checkpoint for Ret signaling by modulating the rate of RET degradation after ligand activation; CD2AP converts it from an inhibitor to a promoter of RET degradation; the function limits the potency of GDNF on neuronal survival. The chain is E3 ubiquitin-protein ligase CBL-C (Cblc) from Rattus norvegicus (Rat).